Here is an 829-residue protein sequence, read N- to C-terminus: Protein roadkill (829 aa).

Low complexity-rich tracts occupy residues 24-36, 122-140, and 266-288; these read EQQQHHLQQQQQQ, TPAATATPPQQQQQQQAAP, and SSSSSSSASASSSSVAASSSSSS. Disordered regions lie at residues 24 to 47, 106 to 142, 266 to 296, and 313 to 400; these read EQQQHHLQQQQQQPATSDNCCCEN, SSLQQQQHQQQQHHPHTPAATATPPQQQQQQQAAPSV, SSSSSSSASASSSSVAASSSSSSHHLHSHHS, and HLNQ…NQQQ. Over residues 313–322 the composition is skewed to basic residues; it reads HLNQQQHHHP. Low complexity-rich tracts occupy residues 323-353, 372-382, and 389-400; these read LSASSSSASASPSASTSSSSSYQQSSVQQQH, SSSSSSSSSSS, and SSSSSNSNNQQQ. Residues 486 to 616 form the MATH domain; the sequence is KFSYMWTINN…EDKLTIFCEV (131 aa). One can recognise a BTB domain in the interval 655–722; sequence SDVTLSVGGR…IYTGKAPNLE (68 aa).

This sequence belongs to the Tdpoz family. Interacts with ci and gft/CUL3. As to expression, expressed near the anterio-posterior compartment boundary of antenna, leg and wing disks.

Its subcellular location is the nucleus. Its pathway is protein modification; protein ubiquitination. In terms of biological role, involved in segment polarity. In complex with gft/CUL3, promotes ubiquitination of ci and its subsequent degradation by the proteasome, which results in hh signaling attenuation. This regulation may be important during eye formation for proper packing of ommatidia into a hexagonal array. This is Protein roadkill (rdx) from Drosophila melanogaster (Fruit fly).